We begin with the raw amino-acid sequence, 130 residues long: Small ribosomal subunit protein uS8 (130 aa).

The protein belongs to the universal ribosomal protein uS8 family. In terms of assembly, part of the 30S ribosomal subunit.

One of the primary rRNA binding proteins, it binds directly to 16S rRNA central domain where it helps coordinate assembly of the platform of the 30S subunit. This is Small ribosomal subunit protein uS8 from Korarchaeum cryptofilum (strain OPF8).